A 1047-amino-acid polypeptide reads, in one-letter code: FACT complex subunit SPT16 (1047 aa).

Position 2 is an N-acetylalanine (Ala2). Lys139 carries the post-translational modification N6-acetyllysine. A Phosphoserine modification is found at Ser188. N6-acetyllysine occurs at positions 196 and 223. The stretch at 432 to 507 (LKNEDEEEEE…GEQQIQKARK (76 aa)) forms a coiled coil. At Ser455 the chain carries Phosphoserine. Residues 492-518 (RLTEQKGEQQIQKARKSNVSYKNPSLM) form a disordered region. Lys497 participates in a covalent cross-link: Glycyl lysine isopeptide (Lys-Gly) (interchain with G-Cter in SUMO2). Residues 499-514 (EQQIQKARKSNVSYKN) are compositionally biased toward polar residues. A Phosphoserine modification is found at Ser508. The residue at position 513 (Lys513) is an N6-acetyllysine; alternate. Lys513 participates in a covalent cross-link: Glycyl lysine isopeptide (Lys-Gly) (interchain with G-Cter in SUMO2); alternate. Residue Lys647 forms a Glycyl lysine isopeptide (Lys-Gly) (interchain with G-Cter in SUMO2) linkage. Ser650 and Ser658 each carry phosphoserine. Residues Lys732 and Lys786 each carry the N6-acetyllysine modification. Phosphothreonine is present on Thr903. Position 904 is an N6-acetyllysine (Lys904). A disordered region spans residues 918-1047 (EQGGWSFLEP…SSAPPKKKRK (130 aa)). Residues 927 to 973 (PEGEGSDAEEGDSESEIEDETFNPSEDDYEEEEEDSDEDYSSEAEES) show a composition bias toward acidic residues. Phosphoserine is present on residues Ser979, Ser982, Ser986, and Ser1015. The segment covering 985–1005 (ESGKDWDELEEEARKADRESR) has biased composition (basic and acidic residues). The span at 1024-1039 (VHSSGRGSNRGSRHSS) shows a compositional bias: low complexity.

Belongs to the peptidase M24 family. SPT16 subfamily. In terms of assembly, interacts with MYOG (via C-terminal region). Component of the FACT complex, a stable heterodimer of SSRP1 and SUPT16H. Also a component of a CK2-SPT16-SSRP1 complex which forms following UV irradiation, composed of SSRP1, SUPT16H, CSNK2A1, CSNK2A2 and CSNK2B. Interacts with NEK9. Binds to histone H2A-H2B. Identified in a centromere complex containing histones H2A, H2B and H4, and at least CENPA, CENPB, CENPC, CENPT, CENPN, HJURP, SUPT16H, SSRP1 and RSF1. Interacts with GTF2E2. (Microbial infection) Interacts with Herpes simplex virus 1 (HHV-1) protein ICP22; this interaction relocalizes the FACT complex to viral genomes in infected cells. Post-translationally, ADP-ribosylated. ADP-ribosylation by PARP1 is induced by genotoxic stress and correlates with dissociation of FACT from chromatin. Ubiquitous.

It is found in the nucleus. Its subcellular location is the chromosome. Its function is as follows. Component of the FACT complex, a general chromatin factor that acts to reorganize nucleosomes. The FACT complex is involved in multiple processes that require DNA as a template such as mRNA elongation, DNA replication and DNA repair. During transcription elongation the FACT complex acts as a histone chaperone that both destabilizes and restores nucleosomal structure. It facilitates the passage of RNA polymerase II and transcription by promoting the dissociation of one histone H2A-H2B dimer from the nucleosome, then subsequently promotes the reestablishment of the nucleosome following the passage of RNA polymerase II. The FACT complex is probably also involved in phosphorylation of 'Ser-392' of p53/TP53 via its association with CK2 (casein kinase II). The sequence is that of FACT complex subunit SPT16 (SUPT16H) from Homo sapiens (Human).